We begin with the raw amino-acid sequence, 508 residues long: Maturase K (508 aa).

Belongs to the intron maturase 2 family. MatK subfamily.

The protein resides in the plastid. The protein localises to the chloroplast. Functionally, usually encoded in the trnK tRNA gene intron. Probably assists in splicing its own and other chloroplast group II introns. The chain is Maturase K from Pelargonium hortorum (Common geranium).